We begin with the raw amino-acid sequence, 58 residues long: Attractin (58 aa).

Intrachain disulfides connect C4-C41, C13-C33, and C20-C26. N8 carries an N-linked (GlcNAc...) asparagine glycan.

Produced by the albumen gland of the egg cordons.

The protein localises to the secreted. Water-borne pheromone that attract the marine mollusk Aplysia into breeding aggregations and coordinate male and female reproductive behavior within the aggregation. The sequence is that of Attractin (ATT) from Aplysia fasciata (Mottled sea hare).